A 176-amino-acid chain; its full sequence is ATP synthase subunit delta (176 aa).

It belongs to the ATPase delta chain family. As to quaternary structure, F-type ATPases have 2 components, F(1) - the catalytic core - and F(0) - the membrane proton channel. F(1) has five subunits: alpha(3), beta(3), gamma(1), delta(1), epsilon(1). F(0) has three main subunits: a(1), b(2) and c(10-14). The alpha and beta chains form an alternating ring which encloses part of the gamma chain. F(1) is attached to F(0) by a central stalk formed by the gamma and epsilon chains, while a peripheral stalk is formed by the delta and b chains.

The protein localises to the cell inner membrane. F(1)F(0) ATP synthase produces ATP from ADP in the presence of a proton or sodium gradient. F-type ATPases consist of two structural domains, F(1) containing the extramembraneous catalytic core and F(0) containing the membrane proton channel, linked together by a central stalk and a peripheral stalk. During catalysis, ATP synthesis in the catalytic domain of F(1) is coupled via a rotary mechanism of the central stalk subunits to proton translocation. Functionally, this protein is part of the stalk that links CF(0) to CF(1). It either transmits conformational changes from CF(0) to CF(1) or is implicated in proton conduction. The sequence is that of ATP synthase subunit delta from Polaromonas sp. (strain JS666 / ATCC BAA-500).